A 428-amino-acid chain; its full sequence is Serine--tRNA ligase (428 aa).

233–235 provides a ligand contact to L-serine; that stretch reads TAE. 264–266 lines the ATP pocket; that stretch reads RRE. Glu287 contacts L-serine. Residue 351–354 participates in ATP binding; the sequence is EVSS. Ser387 provides a ligand contact to L-serine.

Belongs to the class-II aminoacyl-tRNA synthetase family. Type-1 seryl-tRNA synthetase subfamily. In terms of assembly, homodimer. The tRNA molecule binds across the dimer.

It is found in the cytoplasm. It catalyses the reaction tRNA(Ser) + L-serine + ATP = L-seryl-tRNA(Ser) + AMP + diphosphate + H(+). The catalysed reaction is tRNA(Sec) + L-serine + ATP = L-seryl-tRNA(Sec) + AMP + diphosphate + H(+). Its pathway is aminoacyl-tRNA biosynthesis; selenocysteinyl-tRNA(Sec) biosynthesis; L-seryl-tRNA(Sec) from L-serine and tRNA(Sec): step 1/1. In terms of biological role, catalyzes the attachment of serine to tRNA(Ser). Is also able to aminoacylate tRNA(Sec) with serine, to form the misacylated tRNA L-seryl-tRNA(Sec), which will be further converted into selenocysteinyl-tRNA(Sec). The polypeptide is Serine--tRNA ligase (Salinibacter ruber (strain DSM 13855 / M31)).